A 576-amino-acid chain; its full sequence is MLFSKLFAPTLKEPPKDAVLKSPKHPGKAGYIYQIGSGIYNFLPLAKKVLDKIENVTHKRMQEHGAQNILMSFVVLASLWEKSGRLDKYGKELLVFKDRKDNDFVLSPTLEENITEIAANFIKSYKQLPVHLYQIHTKFRDEIRPRFGLVRAREFIMKDGYSFHEDAESLDKEFLNTQSAYKEILSDLGLDFRIVEADSGAIGGSKSREFVVLTECGEDTIVVCQNCDYAANIEIAKRSKRTEPLMSPSALAKFPTPNTTSAPSVAEFFKTEPYFVLKALVNKVIHKDKETLACFFVRGDDNLEETKALNTLNLLGANALELREANEEDLNKAGLIAGFIGPYGLKKHVCYIIFDEDLKEGDCLIVGANEKDFHAVGVDLKGFENLVYADIVQVKESDCCPNCQGALKYHKSLEVGHIFKLGQSYAKSLKASFLDKNGKERFFEMGCYGIGISRLLSVILEQKSDDLGCVWTKNTAPFDVVIVVSNLKDEAQKKLAFEVYERLLQKGVDALLDDRDARFGAKMRDFELIGERLALIVGKQTLESKEFECIKRANLEKQTIKDIELEEKILEMLASE.

It belongs to the class-II aminoacyl-tRNA synthetase family. ProS type 1 subfamily. In terms of assembly, homodimer.

It is found in the cytoplasm. The enzyme catalyses tRNA(Pro) + L-proline + ATP = L-prolyl-tRNA(Pro) + AMP + diphosphate. Functionally, catalyzes the attachment of proline to tRNA(Pro) in a two-step reaction: proline is first activated by ATP to form Pro-AMP and then transferred to the acceptor end of tRNA(Pro). As ProRS can inadvertently accommodate and process non-cognate amino acids such as alanine and cysteine, to avoid such errors it has two additional distinct editing activities against alanine. One activity is designated as 'pretransfer' editing and involves the tRNA(Pro)-independent hydrolysis of activated Ala-AMP. The other activity is designated 'posttransfer' editing and involves deacylation of mischarged Ala-tRNA(Pro). The misacylated Cys-tRNA(Pro) is not edited by ProRS. The chain is Proline--tRNA ligase from Helicobacter pylori (strain J99 / ATCC 700824) (Campylobacter pylori J99).